The primary structure comprises 326 residues: MAFTPFPPRQPTASARLPLTLMTLDDWALATITGADSEKYMQGQVTADVSQMTEDQHLLAAHCDAKGKMWSNLRLFRDGDGFAWIERRSVREPQLTELKKYAVFSKVTIAPDDERVLLGVAGFQARAALANLFSELPSKEKQVVKEGATTLLWFEHPAERFLIVTDEATANMLTDKLRGEAELNNSQQWLALNIEAGFPVIDAANSGQFIPQATNLQALGGISFKKGCYTGQEMVARAKFRGANKRALWLLTGSASRLPEAGEDLELKMGENWRRTGTVLAAVKLEDGQVVVQVVMNNDMEPDSIFRVRDDANTLRIEPLPYSLEE.

2 residues coordinate folate: Trp27 and Trp189.

This sequence belongs to the tRNA-modifying YgfZ family.

The protein resides in the cytoplasm. In terms of biological role, folate-binding protein involved in regulating the level of ATP-DnaA and in the modification of some tRNAs. It is probably a key factor in regulatory networks that act via tRNA modification, such as initiation of chromosomal replication. This is tRNA-modifying protein YgfZ from Escherichia coli (strain SMS-3-5 / SECEC).